The chain runs to 310 residues: Methionyl-tRNA formyltransferase (310 aa).

109 to 112 provides a ligand contact to (6S)-5,6,7,8-tetrahydrofolate; the sequence is SLLP.

This sequence belongs to the Fmt family.

The enzyme catalyses L-methionyl-tRNA(fMet) + (6R)-10-formyltetrahydrofolate = N-formyl-L-methionyl-tRNA(fMet) + (6S)-5,6,7,8-tetrahydrofolate + H(+). In terms of biological role, attaches a formyl group to the free amino group of methionyl-tRNA(fMet). The formyl group appears to play a dual role in the initiator identity of N-formylmethionyl-tRNA by promoting its recognition by IF2 and preventing the misappropriation of this tRNA by the elongation apparatus. The polypeptide is Methionyl-tRNA formyltransferase (Staphylococcus epidermidis (strain ATCC 35984 / DSM 28319 / BCRC 17069 / CCUG 31568 / BM 3577 / RP62A)).